Consider the following 499-residue polypeptide: Aspartyl/glutamyl-tRNA(Asn/Gln) amidotransferase subunit B (499 aa).

Belongs to the GatB/GatE family. GatB subfamily. As to quaternary structure, heterotrimer of A, B and C subunits.

It carries out the reaction L-glutamyl-tRNA(Gln) + L-glutamine + ATP + H2O = L-glutaminyl-tRNA(Gln) + L-glutamate + ADP + phosphate + H(+). The enzyme catalyses L-aspartyl-tRNA(Asn) + L-glutamine + ATP + H2O = L-asparaginyl-tRNA(Asn) + L-glutamate + ADP + phosphate + 2 H(+). Allows the formation of correctly charged Asn-tRNA(Asn) or Gln-tRNA(Gln) through the transamidation of misacylated Asp-tRNA(Asn) or Glu-tRNA(Gln) in organisms which lack either or both of asparaginyl-tRNA or glutaminyl-tRNA synthetases. The reaction takes place in the presence of glutamine and ATP through an activated phospho-Asp-tRNA(Asn) or phospho-Glu-tRNA(Gln). The sequence is that of Aspartyl/glutamyl-tRNA(Asn/Gln) amidotransferase subunit B from Bifidobacterium longum (strain DJO10A).